The primary structure comprises 32 residues: Cytochrome b6-f complex subunit 7 (32 aa).

Residues 9-27 (AAVFWVLIPVGLAGGALLL) traverse the membrane as a helical segment.

It belongs to the PetM family. In terms of assembly, the 4 large subunits of the cytochrome b6-f complex are cytochrome b6, subunit IV (17 kDa polypeptide, PetD), cytochrome f and the Rieske protein, while the 4 small subunits are PetG, PetL, PetM and PetN. The complex functions as a dimer.

Its subcellular location is the cellular thylakoid membrane. Functionally, component of the cytochrome b6-f complex, which mediates electron transfer between photosystem II (PSII) and photosystem I (PSI), cyclic electron flow around PSI, and state transitions. This Prochlorococcus marinus (strain MIT 9303) protein is Cytochrome b6-f complex subunit 7.